Consider the following 152-residue polypeptide: Protein PLANT CADMIUM RESISTANCE 2 (152 aa).

The chain crosses the membrane as a helical span at residues 57 to 79; that stretch reads TAGALYALIAVVTGCACIYSCFY.

The protein belongs to the cornifelin family. Homooligomer. As to expression, expressed in roots, leaves, shoots, stems, flowers and siliques. In leaves, restricted mainly to the vascular tissue. Expressed in all cells in the root tip, in the vascular tissue and the epidermis in the elongation zone, and only in the epidermal cells in the root hair zone.

It localises to the cell membrane. Zinc transporter acting in both zinc extrusion and long-distance zinc transport. Involved in the loading of zinc into the xyleme and in the detoxification of excess zinc at the epidermal cells. Acts independently from the zinc transporters HMA2 and HMA4. May be also involved in cadmium resistance. The sequence is that of Protein PLANT CADMIUM RESISTANCE 2 (PCR2) from Arabidopsis thaliana (Mouse-ear cress).